Reading from the N-terminus, the 456-residue chain is O-phospho-L-seryl-tRNA:Cys-tRNA synthase 2 (456 aa).

Residues 146 to 147, Asn251, and 274 to 276 each bind pyridoxal 5'-phosphate; these read AR and SGH. Lys277 carries the post-translational modification N6-(pyridoxal phosphate)lysine.

It belongs to the SepCysS family. In terms of assembly, homodimer. Interacts with SepRS. The cofactor is pyridoxal 5'-phosphate.

The enzyme catalyses O-phospho-L-seryl-tRNA(Cys) + hydrogen sulfide + H(+) = L-cysteinyl-tRNA(Cys) + phosphate. In terms of biological role, converts O-phospho-L-seryl-tRNA(Cys) (Sep-tRNA(Cys)) to L-cysteinyl-tRNA(Cys) (Cys-tRNA(Cys)). This is O-phospho-L-seryl-tRNA:Cys-tRNA synthase 2 from Methanospirillum hungatei JF-1 (strain ATCC 27890 / DSM 864 / NBRC 100397 / JF-1).